The following is a 97-amino-acid chain: MEAVERIENPCGIRLRIFLQPKASRDQIVGLHDNELKIAITALPVDGAANAHLLKYLSKLFKVPKSSIVLEKGELQRHKQLFVPEPKLIPKEIEALL.

The protein belongs to the UPF0235 family.

This Actinobacillus pleuropneumoniae serotype 5b (strain L20) protein is UPF0235 protein APL_1380.